The following is a 33-amino-acid chain: Cytochrome b6-f complex subunit 7 (33 aa).

Residues 5 to 25 (IFNTAVITFTLVLVGLGAGYL) traverse the membrane as a helical segment.

It belongs to the PetM family. As to quaternary structure, the 4 large subunits of the cytochrome b6-f complex are cytochrome b6, subunit IV (17 kDa polypeptide, PetD), cytochrome f and the Rieske protein, while the 4 small subunits are PetG, PetL, PetM and PetN. The complex functions as a dimer.

The protein localises to the cellular thylakoid membrane. Its function is as follows. Component of the cytochrome b6-f complex, which mediates electron transfer between photosystem II (PSII) and photosystem I (PSI), cyclic electron flow around PSI, and state transitions. This Thermosynechococcus vestitus (strain NIES-2133 / IAM M-273 / BP-1) protein is Cytochrome b6-f complex subunit 7.